A 238-amino-acid polypeptide reads, in one-letter code: Ribonuclease PH (238 aa).

Residues arginine 86 and 124-126 each bind phosphate; that span reads GTR.

It belongs to the RNase PH family. As to quaternary structure, homohexameric ring arranged as a trimer of dimers.

It carries out the reaction tRNA(n+1) + phosphate = tRNA(n) + a ribonucleoside 5'-diphosphate. Functionally, phosphorolytic 3'-5' exoribonuclease that plays an important role in tRNA 3'-end maturation. Removes nucleotide residues following the 3'-CCA terminus of tRNAs; can also add nucleotides to the ends of RNA molecules by using nucleoside diphosphates as substrates, but this may not be physiologically important. Probably plays a role in initiation of 16S rRNA degradation (leading to ribosome degradation) during starvation. This Shigella dysenteriae serotype 1 (strain Sd197) protein is Ribonuclease PH.